The sequence spans 575 residues: Adenine deaminase (575 aa).

It belongs to the metallo-dependent hydrolases superfamily. Adenine deaminase family. Requires Mn(2+) as cofactor.

The enzyme catalyses adenine + H2O + H(+) = hypoxanthine + NH4(+). The chain is Adenine deaminase from Nitratidesulfovibrio vulgaris (strain ATCC 29579 / DSM 644 / CCUG 34227 / NCIMB 8303 / VKM B-1760 / Hildenborough) (Desulfovibrio vulgaris).